A 511-amino-acid polypeptide reads, in one-letter code: Potassium voltage-gated channel subfamily A member 10 (511 aa).

The disordered stretch occupies residues 22 to 50; that stretch reads IQEEPGYATDFDSTSPKGRPGGSSFSNGK. The helical transmembrane segment at 218–238 threads the bilayer; the sequence is VAVVSVLVVVISITIFCLETL. Asn-256 is a glycosylation site (N-linked (GlcNAc...) asparagine). The helical transmembrane segment at 271–292 threads the bilayer; the sequence is FFMVESTCIVWFTFELVLRFVV. Residue Cys-293 is the site of S-palmitoyl cysteine attachment. Residues 303–323 traverse the membrane as a helical segment; that stretch reads IMNIIDIISIIPYFATLITEL. A glycan (N-linked (GlcNAc...) asparagine) is linked at Asn-334. Residues 339 to 358 form a helical; Voltage-sensor membrane-spanning segment; sequence ILRIIRLVRVFRIFKLSRHS. A helical membrane pass occupies residues 375 to 395; that stretch reads LGLLIFFLFIGVILFSSAVYF. Residues 421–426 carry the Selectivity filter motif; that stretch reads TVGYGD. Residues 436-456 form a helical membrane-spanning segment; that stretch reads IVGTLCAIAGVLTIALPVPVI. Residues 489–511 form a disordered region; that stretch reads SRMGSTDSLNKTNGGCSTEKSRK. N-linked (GlcNAc...) asparagine glycosylation occurs at Asn-498.

It belongs to the potassium channel family. A (Shaker) (TC 1.A.1.2) subfamily. Kv1.8/KCNA10 sub-subfamily. Homotetramer. Interacts with KCN4B/POMP. Interaction with KCN4B/POMP is necessary for the modulation of channel activity by cAMP. In terms of tissue distribution, detected in kidney, in proximal tubules, glomerular endothelium, in vascular endothelium and in smooth muscle cells.

It localises to the membrane. The catalysed reaction is K(+)(in) = K(+)(out). Its activity is regulated as follows. The channel activity is up-regulated by cAMP. Functionally, voltage-gated potassium ion channel that mediates K(+) permeability of excitable membranes. When opened in response to the voltage difference across the membrane, KCNA10 channel selectively allows the flow of potassium ions across the membrane down their electrochemical gradient. In Homo sapiens (Human), this protein is Potassium voltage-gated channel subfamily A member 10.